A 406-amino-acid chain; its full sequence is MTEKIVLAYSGGLDTSVAIPWLKDKGYEVIAVVLNVGQPNADFDAIQQKALNVGALDSIVVDAQDEFADHYVAPVIKANALYEGDYPLVSALSRPLIIEHLVKIAHAQNATAIAHGSTGKGNDQVRFEAAIHALDPEMKIEAPIRDFHWSREEEIDYAKEHNVPVPIGKKSPYSIDANLWGRANEAGILENPWNQAPDDAWGMTVSPEAAPDDPTFIDLTFKQGVPVALNDEPMALATMIKELNKLAGDNGIGRIDKIENRLVGIKSREVYEAPAAAVIMAAHHDLENLTLERDVQHFKPTIEDKITNMIYEAQWISPLFDALMAFIDKTQAVVNGTVKMKLYKGNATAVARKSAHNSLYDEDLATYTSADSFDQEAAAGFIKLWTLPTTVFEQVNHVHSEEKQHD.

8–16 contacts ATP; that stretch reads AYSGGLDTS. L-citrulline is bound at residue Y86. An ATP-binding site is contributed by G116. L-aspartate contacts are provided by T118, N122, and D123. Residue N122 coordinates L-citrulline. L-citrulline is bound by residues R126, S174, E259, and Y271.

It belongs to the argininosuccinate synthase family. Type 1 subfamily. Homotetramer.

The protein localises to the cytoplasm. It catalyses the reaction L-citrulline + L-aspartate + ATP = 2-(N(omega)-L-arginino)succinate + AMP + diphosphate + H(+). Its pathway is amino-acid biosynthesis; L-arginine biosynthesis; L-arginine from L-ornithine and carbamoyl phosphate: step 2/3. The polypeptide is Argininosuccinate synthase (Lacticaseibacillus paracasei (strain ATCC 334 / BCRC 17002 / CCUG 31169 / CIP 107868 / KCTC 3260 / NRRL B-441) (Lactobacillus paracasei)).